The following is a 535-amino-acid chain: Bifunctional purine biosynthesis protein PurH (535 aa).

Residues M1–T145 form the MGS-like domain.

It belongs to the PurH family.

It carries out the reaction (6R)-10-formyltetrahydrofolate + 5-amino-1-(5-phospho-beta-D-ribosyl)imidazole-4-carboxamide = 5-formamido-1-(5-phospho-D-ribosyl)imidazole-4-carboxamide + (6S)-5,6,7,8-tetrahydrofolate. It catalyses the reaction IMP + H2O = 5-formamido-1-(5-phospho-D-ribosyl)imidazole-4-carboxamide. It participates in purine metabolism; IMP biosynthesis via de novo pathway; 5-formamido-1-(5-phospho-D-ribosyl)imidazole-4-carboxamide from 5-amino-1-(5-phospho-D-ribosyl)imidazole-4-carboxamide (10-formyl THF route): step 1/1. It functions in the pathway purine metabolism; IMP biosynthesis via de novo pathway; IMP from 5-formamido-1-(5-phospho-D-ribosyl)imidazole-4-carboxamide: step 1/1. The protein is Bifunctional purine biosynthesis protein PurH of Variovorax paradoxus (strain S110).